Consider the following 306-residue polypeptide: Glutamyl-Q tRNA(Asp) synthetase (306 aa).

L-glutamate-binding positions include 4-8 (RYAPS) and Glu40. Positions 7 to 17 (PSPSGDLHFGN) match the 'HIGH' region motif. Residues Cys92, Cys94, Tyr113, and Cys117 each coordinate Zn(2+). 2 residues coordinate L-glutamate: Tyr180 and Arg198. The short motif at 236 to 240 (RLAKR) is the 'KMSKS' region element. Residue Lys239 coordinates ATP.

Belongs to the class-I aminoacyl-tRNA synthetase family. GluQ subfamily. Requires Zn(2+) as cofactor.

Catalyzes the tRNA-independent activation of glutamate in presence of ATP and the subsequent transfer of glutamate onto a tRNA(Asp). Glutamate is transferred on the 2-amino-5-(4,5-dihydroxy-2-cyclopenten-1-yl) moiety of the queuosine in the wobble position of the QUC anticodon. This chain is Glutamyl-Q tRNA(Asp) synthetase, found in Corynebacterium efficiens (strain DSM 44549 / YS-314 / AJ 12310 / JCM 11189 / NBRC 100395).